The sequence spans 1434 residues: Probable ATP-dependent RNA helicase spindle-E (1434 aa).

In terms of domain architecture, Helicase ATP-binding spans 125–292; that stretch reads LAAINAHPVV…FTTTNSIPPV (168 aa). 138–145 is an ATP binding site; that stretch reads GETGCGKT. A DEAH box motif is present at residues 238-241; that stretch reads DEVH. Residues 354–526 enclose the Helicase C-terminal domain; sequence QSRQSYDEAL…NSVLKAKVLN (173 aa). The Tudor domain occupies 938–1001; the sequence is ASAIAKGMMV…RLMPRELTEQ (64 aa).

Belongs to the DEAD box helicase family. DEAH subfamily.

It is found in the cytoplasm. The protein localises to the perinuclear region. The protein resides in the cytoplasmic ribonucleoprotein granule. It carries out the reaction ATP + H2O = ADP + phosphate + H(+). Probable ATP-binding RNA helicase which plays a central role during spermatogenesis and oogenesis by repressing transposable elements and preventing their mobilization, which is essential for the germline integrity. Acts via the piRNA metabolic process, which mediates the repression of transposable elements during meiosis by forming complexes composed of piRNAs and Piwi and govern the methylation and subsequent repression of transposons. Involved in the repression of LTR retrotransposon copia. Also involved in telomere regulation by repressing specialized telomeric retroelements HeT-A, TAHRE, and TART; Drosophila telomeres being maintained by transposition of specialized telomeric retroelements. Involved in telomeric trans-silencing, a repression mechanism by which a transposon or a transgene inserted in subtelomeric heterochromatin has the capacity to repress in trans in the female germline, a homologous transposon, or transgene located in euchromatin. Involved in the repression of testis-expressed Stellate genes by the homologous Su(Ste) repeats. Required for anteroposterior and dorsoventral axis formation during oogenesis. Key component of the perinuclear meiotic nuage, an electron dense structure involved in the post-transcriptional regulation of transposons and mRNAs; required for recruitment of other nuage comonents including vas, krimp, aub and mael. May have a role in production of piwi-interacting RNA (piRNA). In Drosophila melanogaster (Fruit fly), this protein is Probable ATP-dependent RNA helicase spindle-E.